Consider the following 395-residue polypeptide: Putative nickel insertion protein (395 aa).

This sequence belongs to the LarC family.

In Archaeoglobus fulgidus (strain ATCC 49558 / DSM 4304 / JCM 9628 / NBRC 100126 / VC-16), this protein is Putative nickel insertion protein.